We begin with the raw amino-acid sequence, 210 residues long: UPF0173 protein PF0020 (210 aa).

The protein belongs to the UPF0173 family.

The sequence is that of UPF0173 protein PF0020 from Pyrococcus furiosus (strain ATCC 43587 / DSM 3638 / JCM 8422 / Vc1).